A 130-amino-acid polypeptide reads, in one-letter code: Small ribosomal subunit protein uS9 (130 aa).

This sequence belongs to the universal ribosomal protein uS9 family.

The sequence is that of Small ribosomal subunit protein uS9 from Edwardsiella ictaluri (strain 93-146).